The sequence spans 132 residues: Small ribosomal subunit protein uS9 (132 aa).

Belongs to the universal ribosomal protein uS9 family.

This Leptospira interrogans serogroup Icterohaemorrhagiae serovar copenhageni (strain Fiocruz L1-130) protein is Small ribosomal subunit protein uS9.